Reading from the N-terminus, the 378-residue chain is UPF0754 membrane protein BCAH187_A1042 (378 aa).

2 consecutive transmembrane segments (helical) span residues 1 to 21 (MNIW…GGFT) and 357 to 377 (YLGA…LLFL).

The protein belongs to the UPF0754 family.

It is found in the cell membrane. The chain is UPF0754 membrane protein BCAH187_A1042 from Bacillus cereus (strain AH187).